The chain runs to 196 residues: Small ribosomal subunit protein uS4c (196 aa).

An S4 RNA-binding domain is found at 89–149 (MRLDNILFRL…DKQRSKALIQ (61 aa)).

The protein belongs to the universal ribosomal protein uS4 family. As to quaternary structure, part of the 30S ribosomal subunit. Contacts protein S5. The interaction surface between S4 and S5 is involved in control of translational fidelity.

The protein resides in the plastid. The protein localises to the chloroplast. In terms of biological role, one of the primary rRNA binding proteins, it binds directly to 16S rRNA where it nucleates assembly of the body of the 30S subunit. Its function is as follows. With S5 and S12 plays an important role in translational accuracy. The chain is Small ribosomal subunit protein uS4c (rps4) from Asparagus maritimus (Sea asparagus).